A 438-amino-acid polypeptide reads, in one-letter code: Battenin (438 aa).

The tract at residues 1–29 (MGGCAGSRRRLLDSEEEETAPEPRPPRSY) is disordered. At 1–37 (MGGCAGSRRRLLDSEEEETAPEPRPPRSYHKGALWKN) the chain is on the cytoplasmic side. The residue at position 14 (serine 14) is a Phosphoserine. Residues 38–58 (VMGFWLLGLCNNFSYVVMLSA) traverse the membrane as a helical segment. Residues 59-127 (AHDILSHQRA…GLHLLPYSPR (69 aa)) lie on the Lumenal side of the membrane. Residues 68 to 89 (ASGNQSHVDPDPPPTAHNSSSR) form a disordered region. Residues asparagine 71 and asparagine 85 are each glycosylated (N-linked (GlcNAc...) asparagine). Residues 128–148 (VLVSGICAAGSFILVAFSHSV) traverse the membrane as a helical segment. The Cytoplasmic portion of the chain corresponds to 149–151 (GTS). Residues 152 to 172 (LCGVVLASISSGVGEVTFLSL) form a helical membrane-spanning segment. Residues 173–182 (TAFYPRAVIS) lie on the Lumenal side of the membrane. The helical transmembrane segment at 183-203 (WWSSGTGGAGLMGALSYLGLT) threads the bilayer. Over 204-277 (QAGLSPQHTL…NLSLQERWTV (74 aa)) the chain is Cytoplasmic. The tract at residues 236 to 267 (PQDPGGEEEAETSARQPLIDSETPESKPDSSS) is disordered. Positions 242-244 (EEE) match the Lysosomal targeting motif motif. Residues 253 to 254 (LI) carry the Lysosomal targeting motif. Required for AP1G1, AP2A2 and AP3D1 interaction motif. Residues 278–298 (FKGLLWYIVPLVLVYFAEYFI) traverse the membrane as a helical segment. Residues 299–346 (NQGLFELLFFRNTSLNHAQQYRWYQMLYQAGVFVSRSSLHCCRIRFTW) lie on the Lumenal side of the membrane. Asparagine 310 is a glycosylation site (N-linked (GlcNAc...) asparagine). The chain crosses the membrane as a helical span at residues 347-367 (VLALLQCLNLAFLLVDVWFSF). Topologically, residues 368 to 438 (LPSIYLVFLI…PLHDFLCHLS (71 aa)) are cytoplasmic. The Lysosomal targeting motif signature appears at 409-419 (MAAACISDTLG). A Cysteine methyl ester modification is found at cysteine 435. The S-farnesyl cysteine moiety is linked to residue cysteine 435. The propeptide at 436–438 (HLS) is removed in mature form.

This sequence belongs to the battenin family. In terms of assembly, interacts with DCTN1, KIF3A, RAB7A and RILP. Interacts with CLN5. Post-translationally, highly glycosylated. Farnesylation is important for trafficking to lysosomes.

The protein resides in the lysosome membrane. Its subcellular location is the late endosome. It is found in the lysosome. Mediates microtubule-dependent, anterograde transport connecting the Golgi network, endosomes, autophagosomes, lysosomes and plasma membrane, and participates in several cellular processes such as regulation of lysosomal pH, lysosome protein degradation, receptor-mediated endocytosis, autophagy, transport of proteins and lipids from the TGN, apoptosis and synaptic transmission. Facilitates the proteins transport from trans-Golgi network (TGN)-to other membrane compartments such as transport of microdomain-associated proteins to the plasma membrane, IGF2R transport to the lysosome where it regulates the CTSD release leading to regulation of CTSD maturation and thereby APP intracellular processing. Moreover regulates CTSD activity in response to osmotic stress. Also binds galactosylceramide and transports it from the trans Golgi to the rafts, which may have immediate and downstream effects on cell survival by modulating ceramide synthesis. At the plasma membrane, regulates actin-dependent events including filopodia formation, cell migration, and pinocytosis through ARF1-CDC42 pathway and also the cytoskeleton organization through interaction with MYH10 and fodrin leading to the regulation of the plasma membrane association of Na+, K+ ATPase complex. Regulates synaptic transmission in the amygdala, hippocampus, and cerebellum through regulation of synaptic vesicles density and their proximity to active zones leading to modulation of short-term plasticity and age-dependent anxious behavior, learning and memory. Regulates autophagic vacuoles (AVs) maturation by modulating the trafficking between endocytic and autophagolysosomal/lysosomal compartments, which involves vesicle fusion leading to regulation of degradation process. Also participates in cellular homeostasis of compounds such as, water, ions, amino acids, proteins and lipids in several tissue namely in brain and kidney through regulation of their transport and synthesis. The protein is Battenin of Canis lupus familiaris (Dog).